The chain runs to 120 residues: Flagellar protein FliT (120 aa).

The interval 1-50 (MERHQHLLSEYQQILTLSEQMLMLATVENWNALVDLEMTYLKAVENTANI) is required for homodimerization. Residues 60 to 98 (LQELLRQKLRSILENEIEIKRLLQRRLDKLSELVGQSTR) form a fliD binding region.

Belongs to the FliT family. As to quaternary structure, homodimer. Interacts with FliD and FlhC.

It localises to the cytoplasm. The protein resides in the cytosol. Its function is as follows. Dual-function protein that regulates the transcription of class 2 flagellar operons and that also acts as an export chaperone for the filament-capping protein FliD. As a transcriptional regulator, acts as an anti-FlhDC factor; it directly binds FlhC, thus inhibiting the binding of the FlhC/FlhD complex to class 2 promoters, resulting in decreased expression of class 2 flagellar operons. As a chaperone, effects FliD transition to the membrane by preventing its premature polymerization, and by directing it to the export apparatus. This Yersinia pestis bv. Antiqua (strain Antiqua) protein is Flagellar protein FliT.